Here is a 158-residue protein sequence, read N- to C-terminus: Small ribosomal subunit protein uS9 (158 aa).

Residues 1 to 20 are compositionally biased toward polar residues; sequence MSETMQSLDQLSALKTTQPD. The disordered stretch occupies residues 1–29; that stretch reads MSETMQSLDQLSALKTTQPDAPTYTKKVD.

This sequence belongs to the universal ribosomal protein uS9 family.

The polypeptide is Small ribosomal subunit protein uS9 (Rhodopseudomonas palustris (strain BisB5)).